The primary structure comprises 90 residues: Small ribosomal subunit protein uS15c (90 aa).

The protein belongs to the universal ribosomal protein uS15 family. Part of the 30S ribosomal subunit.

It localises to the plastid. Its subcellular location is the chloroplast. This is Small ribosomal subunit protein uS15c (rps15-A) from Lolium perenne (Perennial ryegrass).